The following is a 347-amino-acid chain: Zinc-type alcohol dehydrogenase-like protein C16A3.02c (347 aa).

It belongs to the zinc-containing alcohol dehydrogenase family. Quinone oxidoreductase subfamily.

Its subcellular location is the golgi apparatus. It is found in the endoplasmic reticulum. The chain is Zinc-type alcohol dehydrogenase-like protein C16A3.02c from Schizosaccharomyces pombe (strain 972 / ATCC 24843) (Fission yeast).